A 359-amino-acid polypeptide reads, in one-letter code: Mannose-1-phosphate guanylyltransferase (359 aa).

Belongs to the transferase hexapeptide repeat family.

It carries out the reaction alpha-D-mannose 1-phosphate + GTP + H(+) = GDP-alpha-D-mannose + diphosphate. The protein operates within cell wall biogenesis. Its pathway is nucleotide-sugar biosynthesis; GDP-alpha-D-mannose biosynthesis; GDP-alpha-D-mannose from alpha-D-mannose 1-phosphate (GTP route): step 1/1. In terms of biological role, catalyzes the formation of GDP-mannose from D-mannose-1-phosphate and GTP. Plays an important role in the synthesis of different glycoconjugates which are responsible for cell wall structure, virulence and immunomodulatory activity of M.tuberculosis. The protein is Mannose-1-phosphate guanylyltransferase of Mycobacterium tuberculosis (strain ATCC 25618 / H37Rv).